Here is a 415-residue protein sequence, read N- to C-terminus: Ornithine cyclodeaminase (415 aa).

Residues Asn-241, Ala-242, Asp-320, Thr-352, Leu-354, His-355, Asp-373, Asp-396, and Val-397 each coordinate NAD(+).

It belongs to the AgrE/ArgZ ornithine cyclodeaminase family. The cofactor is NAD(+).

It catalyses the reaction L-ornithine = L-proline + NH4(+). Its function is as follows. Catalyzes the conversion of ornithine to proline, with the release of ammonia. This Methanococcus maripaludis (strain DSM 14266 / JCM 13030 / NBRC 101832 / S2 / LL) protein is Ornithine cyclodeaminase.